The sequence spans 107 residues: Small ribosomal subunit protein uS10 (107 aa).

The protein belongs to the universal ribosomal protein uS10 family. Part of the 30S ribosomal subunit.

In terms of biological role, involved in the binding of tRNA to the ribosomes. The protein is Small ribosomal subunit protein uS10 of Deinococcus geothermalis (strain DSM 11300 / CIP 105573 / AG-3a).